The following is a 1736-amino-acid chain: Hybrid signal transduction histidine kinase I (1736 aa).

Over residues 143-161 the composition is skewed to low complexity; that stretch reads HNINNNQNNQNSVNINSSN. The segment at 143–171 is disordered; that stretch reads HNINNNQNNQNSVNINSSNKGQYNRPEPS. Residues 234-286 enclose the PAC domain; sequence FEYPLRINRKNDNLVRYIQLKGEIIKKDDKVFKVLGVCHDFSEIQEAKDKLEE. The PAS domain maps to 287–358; it reads ESKFVEALIG…QINLEKSGTP (72 aa). The disordered stretch occupies residues 378 to 469; that stretch reads TSNQQQSSLS…NTTNGIGGAT (92 aa). The segment covering 379–389 has biased composition (low complexity); sequence SNQQQSSLSKS. Residues 392-412 are compositionally biased toward polar residues; sequence PRSQSNCSNGNKSQNRLSKNY. A compositionally biased stretch (low complexity) spans 413–469; it reads STTTTTTNNNNNNNNNNNNNNNNNNNNNSISQQQQTQVSTQQTQQQQNTTNGIGGAT. Residues 556–908 enclose the Histidine kinase domain; that stretch reads NISHELLSPM…TFHFILSIKS (353 aa). A Phosphohistidine; by autocatalysis modification is found at H559. Disordered stretches follow at residues 711-821, 952-971, 1080-1124, 1157-1258, 1277-1301, 1330-1393, and 1419-1520; these read NSKT…KREK, TKKVKKDSNDNGNNDSTNYG, NGNN…KQHS, PPKS…ILSP, SLTPNSSNSTSTNVTQSSSNIINNG, ASSP…NLSS, and SNNL…PPIL. Acidic residues-rich tracts occupy residues 725 to 735 and 758 to 789; these read SIDGDYDDQDN and ELDEKDNSDDDDENDDENDETDENDDDTDDDT. 3 stretches are compositionally biased toward low complexity: residues 790-807, 961-971, and 1080-1096; these read SSNTSRNNISNNLLFHNN, DNGNNDSTNYG, and NGNNNSGISLNNSNNNI. Polar residues predominate over residues 1097 to 1117; sequence QTPNGLNNSRGSSLISTPSTK. Low complexity-rich tracts occupy residues 1186–1195 and 1202–1258; these read SSPPINSSSS and TNGS…ILSP. Positions 1330 to 1339 are enriched in polar residues; the sequence is ASSPKQSQRG. 4 stretches are compositionally biased toward low complexity: residues 1340–1376, 1425–1475, 1482–1492, and 1506–1520; these read YSPKQQYSPKQYSPKQQYSPKQYSPKQQQQQQQQQQQ, NNNN…STPE, SPRSNNNNNCS, and SSTITTPQFQSPPIL. Residues 1551 to 1674 form the Response regulatory domain; the sequence is KVLVAEDNTM…LLYEVINTQI (124 aa). D1605 is modified (4-aspartylphosphate). Positions 1695–1722 are enriched in low complexity; that stretch reads NNNNNNTNNNNNNNNSSNPVNNNNSNSI. The interval 1695-1736 is disordered; sequence NNNNNNTNNNNNNNNSSNPVNNNNSNSIDATQQELNNEKIRI.

Post-translationally, activation probably requires transfer of a phosphate group between a histidine in the kinase core (transmitter) domain and an aspartate of the receiver domain.

It carries out the reaction ATP + protein L-histidine = ADP + protein N-phospho-L-histidine.. Acts as a receptor histidine kinase for a signal transduction pathway. This protein undergoes an ATP-dependent autophosphorylation at a conserved histidine residue in the kinase core, and a phosphoryl group is then transferred to a conserved aspartate residue in the receiver domain. The chain is Hybrid signal transduction histidine kinase I (dhkI-1) from Dictyostelium discoideum (Social amoeba).